The primary structure comprises 443 residues: MKEIGALQAEYPLVNKLIATKEVFWINPHIEKYERAIKDSPLNEENVKDAEERLKRFAPYIAKVFPETKGTNGIIESPLVKIPSMKEALETNYKQTILGELLLKCDSHLPISGSIKARGGIYEVLKHAEQLALQHGMLTEEDDYSILDSDTCREFFSKYSIAVGSTGNLGLSIGIMSANLGFNVTVHMSADAKEWKKSLLRSKGVNVIEYEDDYSKAVEEGRRQADADPSCYFVDDENSHDLFLGYSVAASRLQKQLEELEVVVDEDHPLFVYLPCGVGGGPGGVAFGLKLLYKDNVHCFFAEPTHSPCMLLGLMTGLHDKIAVQDIGIDNVTDADGLAVGRPSGFVGKTMEPFLSGNYTVNDEELYRLLKELADTENIYLEPSALAGMIGPVKVCKEDEYLQKQQLTEKVKKGTHIVWGTGGSMVPKDVMNEYYRKGLELTI.

Lys-116 carries the post-translational modification N6-(pyridoxal phosphate)lysine.

Belongs to the serine/threonine dehydratase family. DsdA subfamily. Pyridoxal 5'-phosphate is required as a cofactor.

It carries out the reaction D-serine = pyruvate + NH4(+). The chain is Probable D-serine dehydratase from Bacillus cereus (strain G9842).